Here is a 429-residue protein sequence, read N- to C-terminus: Glutamate-1-semialdehyde 2,1-aminomutase (429 aa).

Position 265 is an N6-(pyridoxal phosphate)lysine (K265).

It belongs to the class-III pyridoxal-phosphate-dependent aminotransferase family. HemL subfamily. In terms of assembly, homodimer. Requires pyridoxal 5'-phosphate as cofactor.

The protein resides in the cytoplasm. It carries out the reaction (S)-4-amino-5-oxopentanoate = 5-aminolevulinate. The protein operates within porphyrin-containing compound metabolism; protoporphyrin-IX biosynthesis; 5-aminolevulinate from L-glutamyl-tRNA(Glu): step 2/2. In Legionella pneumophila subsp. pneumophila (strain Philadelphia 1 / ATCC 33152 / DSM 7513), this protein is Glutamate-1-semialdehyde 2,1-aminomutase.